Consider the following 360-residue polypeptide: Membrane-bound lytic murein transglycosylase C (360 aa).

An N-terminal signal peptide occupies residues 1 to 16; it reads MKKLLALAVIAPLLIS. Cys17 carries the N-palmitoyl cysteine lipid modification. Cys17 is lipidated: S-diacylglycerol cysteine.

The protein belongs to the transglycosylase Slt family.

Its subcellular location is the cell outer membrane. It carries out the reaction Exolytic cleavage of the (1-&gt;4)-beta-glycosidic linkage between N-acetylmuramic acid (MurNAc) and N-acetylglucosamine (GlcNAc) residues in peptidoglycan, from either the reducing or the non-reducing ends of the peptidoglycan chains, with concomitant formation of a 1,6-anhydrobond in the MurNAc residue.. Murein-degrading enzyme. May play a role in recycling of muropeptides during cell elongation and/or cell division. The sequence is that of Membrane-bound lytic murein transglycosylase C from Salmonella arizonae (strain ATCC BAA-731 / CDC346-86 / RSK2980).